A 754-amino-acid polypeptide reads, in one-letter code: Ribosomal RNA large subunit methyltransferase K/L (754 aa).

The region spanning 46 to 157 (TAYRLCLWSR…RGEAILSLDL (112 aa)) is the THUMP domain.

It belongs to the methyltransferase superfamily. RlmKL family.

The protein resides in the cytoplasm. It catalyses the reaction guanosine(2445) in 23S rRNA + S-adenosyl-L-methionine = N(2)-methylguanosine(2445) in 23S rRNA + S-adenosyl-L-homocysteine + H(+). The enzyme catalyses guanosine(2069) in 23S rRNA + S-adenosyl-L-methionine = N(2)-methylguanosine(2069) in 23S rRNA + S-adenosyl-L-homocysteine + H(+). In terms of biological role, specifically methylates the guanine in position 2445 (m2G2445) and the guanine in position 2069 (m7G2069) of 23S rRNA. This chain is Ribosomal RNA large subunit methyltransferase K/L, found in Pseudomonas fluorescens (strain ATCC BAA-477 / NRRL B-23932 / Pf-5).